The following is a 317-amino-acid chain: Melanocyte-stimulating hormone receptor (317 aa).

The Extracellular segment spans residues 1–37 (MAVQGSQRRLLGSLNSTPTAIPQLGLAANQTGARCLE). The N-linked (GlcNAc...) asparagine glycan is linked to N29. Residues 38–63 (VSIPDGLFLSLGLVSLVENMLVVATI) traverse the membrane as a helical segment. At 64 to 72 (AKNRNLHSP) the chain is on the cytoplasmic side. The helical transmembrane segment at 73–93 (MYCFICCLALSDLLVSGSNVL) threads the bilayer. Topologically, residues 94-118 (ETAVILLLEAGALVARAAVLQQVDN) are extracellular. The helical transmembrane segment at 119-140 (VIDVITCSSMLSSLCFLGAIAV) threads the bilayer. Residues 141-163 (DRYISIFYALRYHSIVTLPRARR) lie on the Cytoplasmic side of the membrane. The helical transmembrane segment at 164-183 (AIAAIWVASVLFSTLFIAYC) threads the bilayer. The Extracellular portion of the chain corresponds to 184-191 (DHTAVLLC). A helical transmembrane segment spans residues 192 to 211 (LVVFFLAVLVLMAVLYVHML). Topologically, residues 212–240 (ARACQHAQGIARLHKRQRPVHQGFGLKGA) are cytoplasmic. The helical transmembrane segment at 241–266 (VTLTILLGIFFLCWGPFFLHLTLIVL) threads the bilayer. The Extracellular portion of the chain corresponds to 267 to 279 (CPEHPTCGCIFKN). Residues 280-300 (FNLFLALIICNAIIDPLIYAF) form a helical membrane-spanning segment. Over 301–317 (HSQELRRTLKEVLTCSW) the chain is Cytoplasmic. Residue C315 is the site of S-palmitoyl cysteine attachment.

Belongs to the G-protein coupled receptor 1 family. Interacts with MGRN1, but does not undergo MGRN1-mediated ubiquitination; this interaction competes with GNAS-binding and thus inhibits agonist-induced cAMP production. Interacts with OPN3; the interaction results in a decrease in MC1R-mediated cAMP signaling and ultimately a decrease in melanin production in melanocytes.

It localises to the cell membrane. Receptor for MSH (alpha, beta and gamma) and ACTH. The activity of this receptor is mediated by G proteins which activate adenylate cyclase. Mediates melanogenesis, the production of eumelanin (black/brown) and phaeomelanin (red/yellow), via regulation of cAMP signaling in melanocytes. The polypeptide is Melanocyte-stimulating hormone receptor (MC1R) (Pan troglodytes (Chimpanzee)).